A 776-amino-acid polypeptide reads, in one-letter code: MNNSLENTISFEEYIRVKARSVPQHRMKEFLDSLASKGPEALQEFQQTATTTMVYQQGGNCIYTDSTEVAGSLLELACPVTTSVQPQTQQEQQIQVQQPQQVQVQVQVQQSPQQVSAQLSPQLTVHQPTEQPIQVQVQIQGQAPQSAAPSIQTPSLQSPSPSQLQAAQIQVQHVQAAQQIQAAEIPEEHIPHQQIQAQLVAGQSLAGGQQIQIQTVGALSPPPSQQGSPREGERRVGTASVLQPVKKRKVDMPITVSYAISGQPVATVLAIPQGQQQSYVSLRPDLLTVDSAHLYSATGTITSPTGETWTIPVYSAQPRGDPQQQSITHIAIPQEAYNAVHVSGSPTALAAVKLEDDKEKMVGTTSVVKNSHEEVVQTLANSLFPAQFMNGNIHIPVAVQAVAGTYQNTAQTVHIWDPQQQPQQQTPQEQTPPPQQQQQQLQVTCSAQTVQVAEVEPQSQPQPSPELLLPNSLKPEEGLEVWKNWAQTKNAELEKDAQNRLAPIGRRQLLRFQEDLISSAVAELNYGLCLMTREARNGEGEPYDPDVLYYIFLCIQKYLFENGRVDDIFSDLYYVRFTEWLHEVLKDVQPRVTPLGYVLPSHVTEEMLWECKQLGAHSPSTLLTTLMFFNTKYFLLKTVDQHMKLAFSKVLRQTKKNPSNPKDKSTSIRYLKALGIHQTGQKVTDDMYAEQTENPENPLRCPIKLYDFYLFKCPQSVKGRNDTFYLTPEPVVAPNSPIWYSVQPISREQMGQMLTRILVIREIQEAIAVANASTMH.

Met1 carries the N-acetylmethionine modification. Residues 6-48 (ENTISFEEYIRVKARSVPQHRMKEFLDSLASKGPEALQEFQQT) enclose the CARD domain. 2 disordered regions span residues 139 to 164 (IQGQ…PSQL) and 218 to 240 (ALSP…GTAS). Ser345 bears the Phosphoserine mark. Residues Lys353 and Lys358 each participate in a glycyl lysine isopeptide (Lys-Gly) (interchain with G-Cter in SUMO2) cross-link. Residues 419–429 (QQQPQQQTPQE) are compositionally biased toward low complexity. Residues 419–441 (QQQPQQQTPQEQTPPPQQQQQQL) are disordered. Residue Ser464 is modified to Phosphoserine.

It localises to the nucleus. The protein localises to the cytoplasm. The protein resides in the cell membrane. Transcriptional regulator that acts as a mediator of the integrated stress response (ISR) through transcriptional control of protein homeostasis under conditions of ER stress. Controls the outcome of the unfolded protein response (UPR) which is an ER-stress response pathway. ER stress induces QRICH1 translation by a ribosome translation re-initiation mechanism in response to EIF2S1/eIF-2-alpha phosphorylation, and stress-induced QRICH1 regulates a transcriptional program associated with protein translation, protein secretion-mediated proteotoxicity and cell death during the terminal UPR. May cooperate with ATF4 transcription factor signaling to regulate ER homeostasis which is critical for cell viability. Up-regulates CASP3/caspase-3 activity in epithelial cells under ER stress. Central regulator of proteotoxicity associated with ER stress-mediated inflammatory diseases in the intestines and liver. Involved in chondrocyte hypertrophy, a process required for normal longitudinal bone growth. The protein is Transcriptional regulator QRICH1 of Homo sapiens (Human).